Reading from the N-terminus, the 303-residue chain is MITRDFFLFLSKSGFLNKMARNWGSRVAAGKIIGGNDFNSSIPTIRQLNSQGLSVTVDHLGEFVNSAEVARERTEECIQTIATIADQELNSHVSLKMTSLGLDIDMDLVYENMTKILQTAEKHKIMVTIDMEDEVRCQKTLDIFKDFRKKYEHVSTVLQAYLYRTEKDIDDLDSLNPFLRLVKGAYKESEKVAFPEKSDVDENYKKIIRKQLLNGHYTAIATHDDKMIDFTKQLAKEHGIANDKFEFQMLYGMRSQTQLSLVKEGYNMRVYLPYGEDWYGYFMRRLAERPSNIAFAFKGMTKK.

Lys96 lines the substrate pocket. Asp130 is an active-site residue. Positions 131 and 159 each coordinate FAD. The active site involves Arg180. FAD is bound by residues 183-185 and 222-223; these read KGA and TH. 284 to 285 serves as a coordination point for substrate; it reads RR.

It belongs to the proline dehydrogenase family. Requires FAD as cofactor.

The enzyme catalyses L-proline + a quinone = (S)-1-pyrroline-5-carboxylate + a quinol + H(+). The protein operates within amino-acid degradation; L-proline degradation into L-glutamate; L-glutamate from L-proline: step 1/2. Functionally, converts proline to delta-1-pyrroline-5-carboxylate. Important for the use of proline as a sole carbon and energy source or a sole nitrogen source. This chain is Proline dehydrogenase 2, found in Bacillus subtilis (strain 168).